The chain runs to 405 residues: Envelope glycoprotein M (405 aa).

The Intravirion segment spans residues 1–17 (MKSSKNDTFVYRTWVKT). The helical transmembrane segment at 18 to 38 (LVVYFVMFVMSAVVPITAMFP) threads the bilayer. The Virion surface portion of the chain corresponds to 39–76 (NLGYPCYFNALVDYGALNLTNYNLAHHLTPTLYLEPPE). A helical transmembrane segment spans residues 77–97 (MFVYITLVFIADCVAFIYYAC). Over 98–121 (GEVALIKARKKVSGLTDLSAWVSA) the chain is Intravirion. The chain crosses the membrane as a helical span at residues 122 to 142 (VGSPTVLFLAILKLWSIQVFI). The Virion surface segment spans residues 143–149 (QVLSYKH). The chain crosses the membrane as a helical span at residues 150-170 (VFLSAFVYFLHFLASVLHACA). The Intravirion portion of the chain corresponds to 171–192 (CVTRFSPVWVVKAQDNSIPQDT). A helical transmembrane segment spans residues 193 to 215 (FLWWVVFYLKPVVTNLYLGCLAL). Over 216–245 (ETLVFSLSVFLALGNSFYFMVGDMVLGAVN) the chain is Virion surface. A helical membrane pass occupies residues 246–266 (LFLILPIFWYILTEVWLASFL). Residue arginine 267 is a topological domain, intravirion. Residues 268-288 (HNFGFYCGMFIASIILILPLV) form a helical membrane-spanning segment. Topologically, residues 289-299 (RYEAVFVSAKL) are virion surface. The helical transmembrane segment at 300–320 (HTTVAINVAIIPILCSVAMLI) threads the bilayer. Residues 321–405 (RICRIFKSMR…TTDSEEEIFP (85 aa)) lie on the Intravirion side of the membrane. A disordered region spans residues 346–405 (LESEPRPRPSRTPSPGRNRRRSSTSSSSSRSTRRQRPVSTQALVSSVLPMTTDSEEEIFP). The span at 386–397 (QALVSSVLPMTT) shows a compositional bias: polar residues.

Belongs to the herpesviridae glycoprotein M family. In terms of assembly, interacts (via N-terminus) with gN (via N-terminus). The gM-gN heterodimer forms the gCII complex.

It is found in the virion membrane. The protein resides in the host Golgi apparatus. It localises to the host trans-Golgi network. The protein localises to the host endosome membrane. Its subcellular location is the host nucleus inner membrane. Its function is as follows. Envelope glycoprotein important for virion assembly and egress. Plays a role in the correct incorporation of gH-gL into virion membrane. Directs the glycoprotein N (gN) to the host trans-Golgi network. The sequence is that of Envelope glycoprotein M from Epstein-Barr virus (strain B95-8) (HHV-4).